Reading from the N-terminus, the 354-residue chain is NAD-dependent epimerase/dehydratase ALT6 (354 aa).

2 residues coordinate NADP(+): Lys-41 and Tyr-174.

This sequence belongs to the NAD(P)-dependent epimerase/dehydratase family. Dihydroflavonol-4-reductase subfamily.

Its pathway is mycotoxin biosynthesis. Functionally, NAD-dependent epimerase/dehydratase; part of the gene cluster that mediates the biosynthesis of the host-selective toxins (HSTs) AAL-toxins, sphinganine-analog mycotoxins responsible for Alternaria stem canker on tomato by the tomato pathotype. The biosynthesis starts with the polyketide synthase ALT1-catalyzed C-16 carbon chain assembly from one starter acetyl-CoA unit with malonyl-CoA extender units. ALT1 also selectively transfers methyl groups at the first and the third cycle of chain elongation for AAL toxin. The C-16 polyketide chain is released from the enzyme by a nucleophilic attack of a carbanion, which is derived from R-carbon of glycin by decarboxylation, on the carbonyl carbon of polyketide acyl chain. This step is probably catalyzed by a pyridoxal 5'-phosphate-dependent aminoacyl transferase ALT4. The respective functions of the other enzymes encoded by the cluster have still to be elucidated. The sphingosine N-acyltransferase-like protein ALT7 seems not to act as a resistance/self-tolerance factor against the toxin in the toxin biosynthetic gene cluster, contrary to what is expected. The protein is NAD-dependent epimerase/dehydratase ALT6 of Alternaria alternata (Alternaria rot fungus).